The chain runs to 229 residues: Sugar fermentation stimulation protein homolog (229 aa).

Belongs to the SfsA family.

In Carboxydothermus hydrogenoformans (strain ATCC BAA-161 / DSM 6008 / Z-2901), this protein is Sugar fermentation stimulation protein homolog.